The sequence spans 210 residues: TM2 domain-containing protein C02F5.13 (210 aa).

Positions 1–18 (MRRLPWLIPFFLVNISNG) are cleaved as a signal peptide. Topologically, residues 19–138 (NNEFRIEFEY…PRTFTKSTPC (120 aa)) are extracellular. Asparagine 91 is a glycosylation site (N-linked (GlcNAc...) asparagine). The chain crosses the membrane as a helical span at residues 139–159 (IIYNGHYFLTTLLYSIFLGVV). Residues 143–191 (GHYFLTTLLYSIFLGVVAVDRFCLGYSAMAVGKLMTLGGFGIWWIVDIF) form the TM2 domain. Over 160–178 (AVDRFCLGYSAMAVGKLMT) the chain is Cytoplasmic. Residues 179–199 (LGGFGIWWIVDIFLLVLGVLG) form a helical membrane-spanning segment. Residues 200 to 210 (PADDSSWEPYY) are Extracellular-facing.

Belongs to the TM2 family.

Its subcellular location is the membrane. This is TM2 domain-containing protein C02F5.13 from Caenorhabditis elegans.